The following is a 405-amino-acid chain: Prenyltransferase phqA (405 aa).

Positions 195, 262, and 332 each coordinate dimethylallyl diphosphate.

The protein belongs to the tryptophan dimethylallyltransferase family.

It participates in alkaloid biosynthesis. Functionally, prenyltransferase; part of the gene cluster that mediates the biosynthesis of paraherquamide, a fungal indole alkaloid that belongs to a family of natural products containing a characteristic bicyclo[2.2.2]diazaoctane core. The first steps in the biosynthesis of paraherquamide is the production of the beta-methyl-proline precursor from L-isoleucine. They require oxidation of a terminally hydroxylated L-isoleucine to the corresponding aldehyde by enzymes which have still to be identified. Spontaneous cyclization and dehydration would yield the 4-methyl pyrolline-5-carboxylic acid, which is then reduced by the pyrroline-5-carboxylate reductase phqD leading to the beta-methyl-proline precursor. The next step of paraherquamide biosynthesis involves coupling of beta-methyl-proline and L-tryptophan by the bimodular NRPS phqB, to produce a monooxopiperazine intermediate. The reductase (R) domain of phqB utilizes NADPH for hydride transfer to reduce the thioester bond of the T domain-tethered linear dipeptide to a hemithioaminal intermediate, which spontaneously cleaves the C-S bond to release the aldehyde product. This compound undergoes spontaneous cyclization and dehydration to give a dienamine which is reverse prenylated at C-2 by the reverse prenyltransferase phqJ. The other prenyltransferase present in the cluster, phqI may be a redundant gene in the pathway. During biosynthetic assembly, the key step to produce the polycyclic core is catalyzed by the bifunctional reductase and intramolecular [4+2] Diels-Alderase, phqE, resulting in formation of the [2.2.2] diazaoctane intermediate preparaherquamide. Following formation of preparaherquamide, an indole 2,3-epoxidation-initiated pinacol-like rearrangement is catalyzed by the phqK FAD-dependent monooxygenase. The prenyltransferase phqA, the cytochrome P450 monooxygenase phqL, and the FAD-linked oxidoreductase phqH (or the cytochrome P450 monooxygenase phqM), are proposed to be involved in the formation of the pyran ring. The FAD-dependent monooxygenase phqK is likely responsible for generation of the spiro-oxindole, and the N-methylation is likely mediated by the phqN methyltransferase leading to the isolable natural product paraherquamide F. However, the order of these biosynthetic steps has still to be determined. In late-stage paraherquamide biosynthesis, the third P450 monooxygenase, phqO, is probably responsible for the C-14 hydroxylation, transforming paraherquamide F to paraherquamide G, and paraherquamide E to the final product paraherquamide A. The expansion from the 6-membered ring pyran (in paraherquamides F and G) to the 7-membered dioxepin ring (in paraherquamides A and E) represents a poorly understood but intriguing process that probably involves the 2-oxoglutarate-dependent dioxygenase phqC. Finally, the remaining members of the paraherquamide cluster, including phqI as well as phqM (or phqH), do not have a clearly prescribed role and appear to be redundant. The polypeptide is Prenyltransferase phqA (Penicillium fellutanum).